The primary structure comprises 266 residues: Glucosamine-6-phosphate deaminase (266 aa).

The Proton acceptor; for enolization step role is filled by Asp72. The For ring-opening step role is filled by Asp141. His143 functions as the Proton acceptor; for ring-opening step in the catalytic mechanism. The active-site For ring-opening step is Glu148.

The protein belongs to the glucosamine/galactosamine-6-phosphate isomerase family. NagB subfamily. In terms of assembly, homohexamer.

It catalyses the reaction alpha-D-glucosamine 6-phosphate + H2O = beta-D-fructose 6-phosphate + NH4(+). The protein operates within amino-sugar metabolism; N-acetylneuraminate degradation; D-fructose 6-phosphate from N-acetylneuraminate: step 5/5. Allosterically activated by N-acetylglucosamine 6-phosphate (GlcNAc6P). In terms of biological role, catalyzes the reversible isomerization-deamination of glucosamine 6-phosphate (GlcN6P) to form fructose 6-phosphate (Fru6P) and ammonium ion. This is Glucosamine-6-phosphate deaminase from Aeromonas hydrophila subsp. hydrophila (strain ATCC 7966 / DSM 30187 / BCRC 13018 / CCUG 14551 / JCM 1027 / KCTC 2358 / NCIMB 9240 / NCTC 8049).